Here is a 127-residue protein sequence, read N- to C-terminus: Small ribosomal subunit protein eS8 (127 aa).

The interval 1–24 (MKWQGKSARKPTGGRLVPARGKRK) is disordered.

It belongs to the eukaryotic ribosomal protein eS8 family. In terms of assembly, part of the 30S ribosomal subunit.

The polypeptide is Small ribosomal subunit protein eS8 (Methanothrix thermoacetophila (strain DSM 6194 / JCM 14653 / NBRC 101360 / PT) (Methanosaeta thermophila)).